We begin with the raw amino-acid sequence, 382 residues long: Mannitol-1-phosphate 5-dehydrogenase (382 aa).

4–15 (AVHFGAGNIGRG) is a binding site for NAD(+).

Belongs to the mannitol dehydrogenase family.

The enzyme catalyses D-mannitol 1-phosphate + NAD(+) = beta-D-fructose 6-phosphate + NADH + H(+). This Vibrio campbellii (strain ATCC BAA-1116) protein is Mannitol-1-phosphate 5-dehydrogenase.